The primary structure comprises 216 residues: Flagellin B3 (216 aa).

Positions 1-11 are excised as a propeptide; the sequence is MLLDYIKSRRG.

Belongs to the archaeal flagellin family.

It localises to the archaeal flagellum. Functionally, flagellin is the subunit protein which polymerizes to form the filaments of archaeal flagella. In Methanocaldococcus jannaschii (strain ATCC 43067 / DSM 2661 / JAL-1 / JCM 10045 / NBRC 100440) (Methanococcus jannaschii), this protein is Flagellin B3 (flaB3).